Consider the following 173-residue polypeptide: Small ribosomal subunit protein uS5 (173 aa).

One can recognise an S5 DRBM domain in the interval 16–79 (LSELLVSVRR…NAAKKNMIRV (64 aa)).

The protein belongs to the universal ribosomal protein uS5 family. As to quaternary structure, part of the 30S ribosomal subunit. Contacts proteins S4 and S8.

Functionally, with S4 and S12 plays an important role in translational accuracy. Its function is as follows. Located at the back of the 30S subunit body where it stabilizes the conformation of the head with respect to the body. The chain is Small ribosomal subunit protein uS5 from Anaplasma phagocytophilum (strain HZ).